Reading from the N-terminus, the 310-residue chain is Acetyl-coenzyme A carboxylase carboxyl transferase subunit alpha (310 aa).

Positions S31–Q285 constitute a CoA carboxyltransferase C-terminal domain.

The protein belongs to the AccA family. In terms of assembly, acetyl-CoA carboxylase is a heterohexamer composed of biotin carboxyl carrier protein (accB), biotin carboxylase (accC) and two subunits each of ACCase subunit alpha (accA) and ACCase subunit beta (accD).

The protein resides in the plastid. It is found in the chloroplast. The catalysed reaction is N(6)-carboxybiotinyl-L-lysyl-[protein] + acetyl-CoA = N(6)-biotinyl-L-lysyl-[protein] + malonyl-CoA. It functions in the pathway lipid metabolism; malonyl-CoA biosynthesis; malonyl-CoA from acetyl-CoA: step 1/1. Component of the acetyl coenzyme A carboxylase (ACC) complex. First, biotin carboxylase catalyzes the carboxylation of biotin on its carrier protein (BCCP) and then the CO(2) group is transferred by the carboxyltransferase to acetyl-CoA to form malonyl-CoA. This chain is Acetyl-coenzyme A carboxylase carboxyl transferase subunit alpha, found in Cyanidioschyzon merolae (strain NIES-3377 / 10D) (Unicellular red alga).